The primary structure comprises 157 residues: MLGKEIGKDQRQKRIQDIILRESVSTQAELVKLLAKEGVQVTQATVSRDINELRLVRVPIGKGRHRYALAQYGGDSDIEEQLARLFQSFVQDVDRGENILVIRTADGHASGVALLLDRWKRDDIVGTLAGEDTIMVVARSTHDGESLMEEFNALMLG.

Belongs to the ArgR family.

The protein resides in the cytoplasm. Its pathway is amino-acid biosynthesis; L-arginine biosynthesis [regulation]. In terms of biological role, regulates arginine biosynthesis genes. The chain is Arginine repressor from Deinococcus radiodurans (strain ATCC 13939 / DSM 20539 / JCM 16871 / CCUG 27074 / LMG 4051 / NBRC 15346 / NCIMB 9279 / VKM B-1422 / R1).